The sequence spans 116 residues: MEDPSKVQLNQLTDYIMKNCLWQFHSRKWDRERQNEGILTKTKQILLGEEVDLSTPADRCYYADALCLADAYKTEYPWINDMSKDELIQLMQQLKDRIDYVTITGSLNAELTDPRY.

In terms of assembly, hexamer of two alpha, two beta, and two delta chains. The cofactor is iron-sulfur cluster.

It catalyses the reaction N2 + 8 reduced [2Fe-2S]-[ferredoxin] + 16 ATP + 16 H2O = H2 + 8 oxidized [2Fe-2S]-[ferredoxin] + 2 NH4(+) + 16 ADP + 16 phosphate + 6 H(+). Its function is as follows. The key enzymatic reactions in nitrogen fixation are catalyzed by the nitrogenase complex, which has 2 components: the iron protein (component 2) and a component 1 which is either a molybdenum-iron protein, a vanadium-iron, or an iron-iron protein. The polypeptide is Nitrogenase iron-iron protein delta chain (anfG) (Clostridium pasteurianum).